The chain runs to 626 residues: MARIARLPDIVANKISAGEVVQRPASVVKELLENAIDAGADKITVAIKDAGKELIRIVDNGAGMLREDALLCVERFATSKITGVDDLDSLQSLGFRGEALASISSVSHFELKTRTAKATLGLRLRYEGGVLVEESGVQGEQGTTISVRNLFYNVPARRKFLKSNATEYNHIFEIVKSFALAYPEIEWRMYSDDEELFHVKRPDILERLNVFYGDDFAASMIELSEENDYLSIKGYLGKPAMQKRRKLDQYFFVNRRVVQNRMLSQAVQQAYGDLLVERQTPFVLLFLTIDPSRIDVNVHPAKMEIRFDDERNVRNMFYPVIKRAIQLHDFSPDLVSTECDQLSSLQPQNSAFRKFSFPDIPHRSITTGDLYRNYREGAVDEPAISRVASAHQGEMFPRHSSADYALAGSGLREGDEGLSSILLAPLYDDDVVPNPKEVEPKIWQLHNKYLICQIKTGLMIIDQHVAHERVLYERAVDVMNQNVPNSQQLLFPQKVEFRPWEYEIFEEIREDLYRLGFNLRLFGNKTIMIEGVPQDVKPGSEVTILQDMIAEYQDNASKLKLDKRDNLAKSYSCRNAIMAGQKLSLEEMRSLIDNLFATREPYSCPHGRPVIIKLSLDQLDKMFGRK.

This sequence belongs to the DNA mismatch repair MutL/HexB family.

This protein is involved in the repair of mismatches in DNA. It is required for dam-dependent methyl-directed DNA mismatch repair. May act as a 'molecular matchmaker', a protein that promotes the formation of a stable complex between two or more DNA-binding proteins in an ATP-dependent manner without itself being part of a final effector complex. The chain is DNA mismatch repair protein MutL from Pelodictyon phaeoclathratiforme (strain DSM 5477 / BU-1).